Reading from the N-terminus, the 60-residue chain is Ixodegrin YY-39 (60 aa).

A signal peptide spans 1-21 (MNAALIAALLILGALTLDATA). Residues 49–51 (RGD) carry the Cell attachment site motif.

The protein belongs to the ixodegrin family. Post-translationally, contains 3 disulfide bonds. Expressed in salivary glands.

Its subcellular location is the secreted. Its function is as follows. Tick salivary platelet aggregation inhibitor that plays an important part in the anti-hemostatic strategy of ticks. Inhibits platelet aggregation induced by ADP, thrombin and thromboxane A2 (TXA2). Blocks platelet adhesion to soluble collagen (most probably through the binding to alpha-2/beta-1 integrin (ITGA2/ITGB1)) and binds to purified glycoprotein IIb/IIIa (ITGA2B/ITGB3) in a dose-dependent manner. In vivo, reduces thrombus weight effectively in a rat arteriovenous shunt model and inhibits thrombosis in a carrageenan-induced mouse tail thrombosis model. The chain is Ixodegrin YY-39 from Ixodes scapularis (Black-legged tick).